The following is a 447-amino-acid chain: UDP-glycosyltransferase 76B1 (447 aa).

UDP-alpha-D-glucose is bound by residues Ser-269, 327–328 (WA), 345–353 (HCGWNSTLE), and 367–370 (FGDQ).

This sequence belongs to the UDP-glycosyltransferase family. In terms of tissue distribution, expressed in roots, leaves, hydathodes, sepals and style.

Glycosylates the amino acid-related molecules isoleucic acid (2-hydroxy-3-methylpentanoic acid) and valic acid (2-hydroxy-3-methylbutyric acid). Acts as a negative regulator of salicylic acid (SA)-dependent plant defense in the absence of pathogens and promotes the jasmonate (JA) response. Negatively influences the onset of senescence. This chain is UDP-glycosyltransferase 76B1, found in Arabidopsis thaliana (Mouse-ear cress).